Consider the following 87-residue polypeptide: Tachykinin-1 (87 aa).

The signal sequence occupies residues 1 to 22 (MIRVGLILCCIFIAGVFEASSA). Residues 23-37 (DDMLTAHNLIKRSEV) constitute a propeptide that is removed on maturation. Met49 carries the methionine amide modification. The propeptide occupies 52-87 (SEELTRRLIQHPGSMSETSKRGPPKKVSRRPYILKK). The disordered stretch occupies residues 61–87 (QHPGSMSETSKRGPPKKVSRRPYILKK). The span at 73–87 (GPPKKVSRRPYILKK) shows a compositional bias: basic residues.

It belongs to the tachykinin family. As to expression, expressed in the posterior salivary gland and more specifically in the mucus-secreting gland cells.

The protein localises to the secreted. Tachykinins are active peptides which excite neurons, evoke behavioral responses, are potent vasodilators and secretagogues, and contract (directly or indirectly) many smooth muscles. The protein is Tachykinin-1 of Octopus vulgaris (Common octopus).